A 574-amino-acid chain; its full sequence is ATP-dependent lipid A-core flippase (574 aa).

Transmembrane regions (helical) follow at residues 11 to 31 (LLSYLKPYWGIALLVLVGFGI), 60 to 80 (WFPLLIVLLVFFRGLGLFMGG), 156 to 176 (YTNWRLTLCIFIFMPIIGVLV), and 244 to 264 (LNSPLVQLVMAMAMSLIVWLA). The ABC transmembrane type-1 domain occupies 23–304 (LLVLVGFGIN…LTDVNEKLQR (282 aa)). The region spanning 335-570 (VRFDHVTLEY…QGAYFQLHQR (236 aa)) is the ABC transporter domain. 368–375 (GRSGAGKT) serves as a coordination point for ATP.

It belongs to the ABC transporter superfamily. Lipid exporter (TC 3.A.1.106) family. As to quaternary structure, homodimer.

The protein localises to the cell inner membrane. It catalyses the reaction ATP + H2O + lipid A-core oligosaccharideSide 1 = ADP + phosphate + lipid A-core oligosaccharideSide 2.. Functionally, involved in lipopolysaccharide (LPS) biosynthesis. Translocates lipid A-core from the inner to the outer leaflet of the inner membrane. Transmembrane domains (TMD) form a pore in the inner membrane and the ATP-binding domain (NBD) is responsible for energy generation. The chain is ATP-dependent lipid A-core flippase from Acinetobacter baylyi (strain ATCC 33305 / BD413 / ADP1).